A 194-amino-acid polypeptide reads, in one-letter code: Ion-translocating oxidoreductase complex subunit A (194 aa).

The next 6 helical transmembrane spans lie at 1–21, 48–68, 73–93, 103–123, 135–155, and 172–192; these read MVMHFFLLFVSNILINNFILV, CVIVFVSIISWLINFYILIPF, LCTMTYMLIIAVSVQIFEIIV, LLGIYLPLITTNCSVLAIPLM, VLYGFSSSLGFFLVLVIFSSI, and PIALITASLLAIAFMGFDGLI.

This sequence belongs to the NqrDE/RnfAE family. In terms of assembly, the complex is composed of six subunits: RnfA, RnfB, RnfC, RnfD, RnfE and RnfG.

The protein resides in the cell inner membrane. In terms of biological role, part of a membrane-bound complex that couples electron transfer with translocation of ions across the membrane. The chain is Ion-translocating oxidoreductase complex subunit A from Buchnera aphidicola subsp. Baizongia pistaciae (strain Bp).